Reading from the N-terminus, the 405-residue chain is DNA primase DnaG (405 aa).

Residues 172 to 248 (DAIIIVEGRA…HVDYIARAPP (77 aa)) enclose the Toprim domain. Residues Glu178, Asp222, and Asp224 each coordinate Mg(2+). The disordered stretch occupies residues 279–303 (ASGERAEAPPQPAQQPQQEQPAPQR). A compositionally biased stretch (low complexity) spans 292-303 (QQPQQEQPAPQR).

The protein belongs to the archaeal DnaG primase family. Forms a ternary complex with MCM helicase and DNA. Component of the archaeal exosome complex. It depends on Mg(2+) as a cofactor.

The enzyme catalyses ssDNA + n NTP = ssDNA/pppN(pN)n-1 hybrid + (n-1) diphosphate.. RNA polymerase that catalyzes the synthesis of short RNA molecules used as primers for DNA polymerase during DNA replication. Also part of the exosome, which is a complex involved in RNA degradation. Acts as a poly(A)-binding protein that enhances the interaction between heteromeric, adenine-rich transcripts and the exosome. The chain is DNA primase DnaG from Pyrobaculum arsenaticum (strain DSM 13514 / JCM 11321 / PZ6).